A 318-amino-acid chain; its full sequence is Malonyl CoA-acyl carrier protein transacylase, mitochondrial (318 aa).

Belongs to the FabD family.

It localises to the mitochondrion. It carries out the reaction holo-[ACP] + malonyl-CoA = malonyl-[ACP] + CoA. The protein operates within lipid metabolism; fatty acid biosynthesis. Functionally, involved in biosynthesis of fatty acids in mitochondria. This chain is Malonyl CoA-acyl carrier protein transacylase, mitochondrial (mct1), found in Schizosaccharomyces pombe (strain 972 / ATCC 24843) (Fission yeast).